The sequence spans 45 residues: Large ribosomal subunit protein bL34 (45 aa).

It belongs to the bacterial ribosomal protein bL34 family.

This chain is Large ribosomal subunit protein bL34 (rpmH), found in Streptomyces coelicolor (strain ATCC BAA-471 / A3(2) / M145).